A 236-amino-acid polypeptide reads, in one-letter code: MLSGSAQLKLLQLVSPTLPVGAYNYSEGLEWLIERGNITNADTLGAWITQELCRGSITVDTAIMVRAHRLAGQMPKTDILPSPTLKHLSYWNQWLTATRESRELREQSLQMGGSLRKLLLDLEPTVQSWFEPIPPTEPCNYAIAFGLGAAFWGIDLHQSGLGYLHSWANNLISAGLRLIPLGQTAGQKLLLHLTPTILHQWQQILLLGDDDLYSCSWGLALASMGHESQYTRLFRS.

The protein belongs to the UreF family. In terms of assembly, ureD, UreF and UreG form a complex that acts as a GTP-hydrolysis-dependent molecular chaperone, activating the urease apoprotein by helping to assemble the nickel containing metallocenter of UreC. The UreE protein probably delivers the nickel.

The protein localises to the cytoplasm. Required for maturation of urease via the functional incorporation of the urease nickel metallocenter. In Synechocystis sp. (strain ATCC 27184 / PCC 6803 / Kazusa), this protein is Urease accessory protein UreF.